The primary structure comprises 463 residues: Probable diacyglycerol O-acyltransferase tgs1 (463 aa).

His137 functions as the Proton acceptor in the catalytic mechanism.

It belongs to the long-chain O-acyltransferase family.

The catalysed reaction is an acyl-CoA + a 1,2-diacyl-sn-glycerol = a triacyl-sn-glycerol + CoA. Its pathway is glycerolipid metabolism; triacylglycerol biosynthesis. Catalyzes the terminal and only committed step in triacylglycerol synthesis by using diacylglycerol and fatty acyl CoA as substrates. Required for storage lipid synthesis. The protein is Probable diacyglycerol O-acyltransferase tgs1 (tgs1) of Mycobacterium tuberculosis (strain CDC 1551 / Oshkosh).